We begin with the raw amino-acid sequence, 944 residues long: UvrABC system protein A (944 aa).

31–38 (GLSGSGKS) contacts ATP. The C4-type zinc finger occupies 253-280 (CPVCGHAISELEPKLFSFNNPAGACPTC). ABC transporter domains follow at residues 309–586 (WDRR…PDSL) and 606–936 (RNKK…HYLK). 639–646 (GVSGSGKS) is an ATP binding site. Residues 739 to 765 (CEACQGDGLIKVEMHFLPDIYVPCDVC) form a C4-type zinc finger.

The protein belongs to the ABC transporter superfamily. UvrA family. Forms a heterotetramer with UvrB during the search for lesions.

It is found in the cytoplasm. The UvrABC repair system catalyzes the recognition and processing of DNA lesions. UvrA is an ATPase and a DNA-binding protein. A damage recognition complex composed of 2 UvrA and 2 UvrB subunits scans DNA for abnormalities. When the presence of a lesion has been verified by UvrB, the UvrA molecules dissociate. The protein is UvrABC system protein A of Pseudomonas putida (strain ATCC 47054 / DSM 6125 / CFBP 8728 / NCIMB 11950 / KT2440).